The sequence spans 332 residues: Glycerol-3-phosphate dehydrogenase [NAD(P)+] (332 aa).

Trp13, Lys34, and Lys108 together coordinate NADPH. The sn-glycerol 3-phosphate site is built by Lys108, Gly136, and Ser138. Residue Ala140 participates in NADPH binding. Lys191, Asp244, Ser254, Arg255, and Asn256 together coordinate sn-glycerol 3-phosphate. Lys191 acts as the Proton acceptor in catalysis. Residue Arg255 participates in NADPH binding. Val279 and Glu281 together coordinate NADPH.

The protein belongs to the NAD-dependent glycerol-3-phosphate dehydrogenase family.

The protein resides in the cytoplasm. The catalysed reaction is sn-glycerol 3-phosphate + NAD(+) = dihydroxyacetone phosphate + NADH + H(+). It carries out the reaction sn-glycerol 3-phosphate + NADP(+) = dihydroxyacetone phosphate + NADPH + H(+). It participates in membrane lipid metabolism; glycerophospholipid metabolism. In terms of biological role, catalyzes the reduction of the glycolytic intermediate dihydroxyacetone phosphate (DHAP) to sn-glycerol 3-phosphate (G3P), the key precursor for phospholipid synthesis. This is Glycerol-3-phosphate dehydrogenase [NAD(P)+] from Francisella tularensis subsp. mediasiatica (strain FSC147).